The following is a 583-amino-acid chain: Epsin-2 (583 aa).

Arginine 8, lysine 11, arginine 25, asparagine 30, arginine 63, and histidine 73 together coordinate a 1,2-diacyl-sn-glycero-3-phospho-(1D-myo-inositol-4,5-bisphosphate). The 133-residue stretch at asparagine 12–arginine 144 folds into the ENTH domain. The span at glutamine 165–histidine 181 shows a compositional bias: polar residues. A disordered region spans residues glutamine 165 to glycine 217. An Omega-N-methylarginine modification is found at arginine 170. A phosphoserine mark is found at serine 173, serine 192, and serine 195. Residues histidine 197–serine 216 show a composition bias toward polar residues. 2 consecutive UIM domains span residues glutamate 218–glutamate 237 and glycine 243–valine 262. Disordered stretches follow at residues serine 293 to proline 384 and threonine 411 to phenylalanine 457. Tandem repeats lie at residues glutamate 301 to tryptophan 303, asparagine 313 to tryptophan 315, aspartate 326 to tryptophan 328, and aspartate 340 to tryptophan 342. Positions glutamate 301 to tryptophan 315 are enriched in polar residues. The interval glutamate 301 to tryptophan 377 is 6 X 3 AA repeats of [DE]-P-W. The segment covering threonine 346 to lysine 355 has biased composition (polar residues). 2 repeat units span residues aspartate 358 to tryptophan 360 and aspartate 375 to tryptophan 377. Serine 431 is subject to Phosphoserine. Low complexity predominate over residues serine 437 to serine 448. Threonine 453 is modified (phosphothreonine). Tandem repeats lie at residues asparagine 482–phenylalanine 484 and asparagine 496–phenylalanine 498. The 3 X 3 AA repeats of N-P-F stretch occupies residues asparagine 482–phenylalanine 581. Serine 514 is modified (phosphoserine). Copy 3 of the repeat occupies asparagine 579 to phenylalanine 581.

The protein belongs to the epsin family. Binds AP-2 and clathrin. Interacts with ITSN1. Interacts with UBQLN2. Binds EPS15. Ubiquitinated. As to expression, highly expressed in brain. Detected at lower levels in lung, liver, muscle and testis.

The protein resides in the cytoplasm. Its function is as follows. Plays a role in the formation of clathrin-coated invaginations and endocytosis. This is Epsin-2 (Epn2) from Rattus norvegicus (Rat).